Here is a 91-residue protein sequence, read N- to C-terminus: Small ribosomal subunit protein uS19 (91 aa).

The protein belongs to the universal ribosomal protein uS19 family.

Functionally, protein S19 forms a complex with S13 that binds strongly to the 16S ribosomal RNA. This is Small ribosomal subunit protein uS19 from Sulfurimonas denitrificans (strain ATCC 33889 / DSM 1251) (Thiomicrospira denitrificans (strain ATCC 33889 / DSM 1251)).